The primary structure comprises 289 residues: CBY1-interacting BAR domain-containing protein 1 (289 aa).

A mitochondrion-targeting transit peptide spans 1–47; the sequence is MMRRTLENRNAQTKQLQTAVSNVEKHFGELCQIFAAYVRKTARLRDK. Residues 10–220 form a BAR-like region; the sequence is NAQTKQLQTA…NIDEDEDLEV (211 aa). A coiled-coil region spans residues 107 to 178; that stretch reads KMKRDDLKAT…INNFERQKMK (72 aa). Residues 265–289 are disordered; the sequence is LRKDQQAEDDEDDELDVTEEENFLK. Over residues 271–289 the composition is skewed to acidic residues; it reads AEDDEDDELDVTEEENFLK.

This sequence belongs to the CIBAR family. As to quaternary structure, homodimer (via BAR-like domain). Heterodimer with FAM92B (via BAR-like domains). Interacts (via BAR-like domain) with CBY1; this interaction is required for targeting FAM92A to centriole and cilium basal body. Interacts (via BAR-like domain) with CBY3; both proteins form a ninefold symmetric structure at the flagellar base; are recruited to the annulus in a mutually dependent manner and regulate annulus positionning.

The protein resides in the cytoplasm. It is found in the cytoskeleton. Its subcellular location is the microtubule organizing center. It localises to the centrosome. The protein localises to the centriole. The protein resides in the cilium basal body. It is found in the cell projection. Its subcellular location is the cilium. It localises to the nucleus. The protein localises to the mitochondrion inner membrane. The protein resides in the flagellum. Functionally, plays a critical role in regulating mitochondrial ultrastructure and function by maintaining the integrity of mitochondrial morphology, particularly the organization of cristae. Preferentially binds to negatively charged phospholipids like cardiolipin and phosphatidylinositol 4,5-bisphosphate enhancing its interaction with mitochondrial membranes. Induces membrane curvature and tubulation, which are critical for maintaining mitochondrial ultrastructure and the organization of cristae. Plays a crucial role in ciliogenesis. May play a role in limb development through its role in ciliogenesis. Plays a key role in the correct positioning of the annulus, a septin-based ring structure in the sperm flagellum, serving both as a physical barrier and a membrane diffusion barrier that separates the midpiece (MP) from the principal piece (PP). This positioning is essential for proper sperm motility and function. Interacts with CBY3 to form a complex which localizes to the curved membrane region of the flagellar pocket. By doing so, may provide stability and rigidity to the periannular membrane to prevent membrane deformation. This function is crucial for halting annulus migration at the proximal end of the fibrous sheath-containing PP. This Homo sapiens (Human) protein is CBY1-interacting BAR domain-containing protein 1.